A 207-amino-acid polypeptide reads, in one-letter code: Mediator of RNA polymerase II transcription subunit 21 (207 aa).

A disordered region spans residues 37-121; sequence PHPDVPDAAP…PDSPRTFASR (85 aa). The segment covering 65–80 has biased composition (low complexity); the sequence is PVPAQSQASPPAQNPA. Positions 84-96 are enriched in gly residues; the sequence is AGAGTSVGEGGQT. Low complexity predominate over residues 97–108; it reads PGPAAGAGADPN. The stretch at 146-196 forms a coiled coil; it reads IDSSEAEQEKRIRELEGELRRVEEERELKMRELKRLRRTLENVLRAVETGL.

This sequence belongs to the Mediator complex subunit 21 family. Component of the Mediator complex.

It localises to the nucleus. Functionally, component of the Mediator complex, a coactivator involved in the regulated transcription of nearly all RNA polymerase II-dependent genes. Mediator functions as a bridge to convey information from gene-specific regulatory proteins to the basal RNA polymerase II transcription machinery. Mediator is recruited to promoters by direct interactions with regulatory proteins and serves as a scaffold for the assembly of a functional preinitiation complex with RNA polymerase II and the general transcription factors. This is Mediator of RNA polymerase II transcription subunit 21 (srb7) from Neosartorya fischeri (strain ATCC 1020 / DSM 3700 / CBS 544.65 / FGSC A1164 / JCM 1740 / NRRL 181 / WB 181) (Aspergillus fischerianus).